A 795-amino-acid polypeptide reads, in one-letter code: Phenylalanine--tRNA ligase beta subunit (795 aa).

The 110-residue stretch at 39 to 148 (AGAFHGVVVG…ADAPLGTDIR (110 aa)) folds into the tRNA-binding domain. The B5 domain occupies 401 to 476 (PARATIALRR…RVYGYNNIPN (76 aa)). Residues aspartate 454, aspartate 460, glutamate 463, and glutamate 464 each contribute to the Mg(2+) site. Residues 701-794 (SRFPANRRDI…LKQRFQASLR (94 aa)) form the FDX-ACB domain.

This sequence belongs to the phenylalanyl-tRNA synthetase beta subunit family. Type 1 subfamily. As to quaternary structure, tetramer of two alpha and two beta subunits. The cofactor is Mg(2+).

It localises to the cytoplasm. The catalysed reaction is tRNA(Phe) + L-phenylalanine + ATP = L-phenylalanyl-tRNA(Phe) + AMP + diphosphate + H(+). The protein is Phenylalanine--tRNA ligase beta subunit (pheT) of Dickeya dadantii (strain 3937) (Erwinia chrysanthemi (strain 3937)).